The chain runs to 443 residues: Xaa-Pro dipeptidase (443 aa).

5 residues coordinate Mn(2+): D246, D257, H339, E384, and E423.

It belongs to the peptidase M24B family. Bacterial-type prolidase subfamily. It depends on Mn(2+) as a cofactor.

The enzyme catalyses Xaa-L-Pro dipeptide + H2O = an L-alpha-amino acid + L-proline. Its function is as follows. Splits dipeptides with a prolyl residue in the C-terminal position. The chain is Xaa-Pro dipeptidase from Escherichia fergusonii (strain ATCC 35469 / DSM 13698 / CCUG 18766 / IAM 14443 / JCM 21226 / LMG 7866 / NBRC 102419 / NCTC 12128 / CDC 0568-73).